The chain runs to 133 residues: Thioredoxin H2 (133 aa).

The tract at residues 1–22 (MGGALSTVFGSGEDATAAGTES) is disordered. The Thioredoxin domain maps to 6 to 133 (STVFGSGEDA…LEKKVSKLRA (128 aa)). Active-site nucleophile residues include Cys59 and Cys62. A disulfide bond links Cys59 and Cys62.

This sequence belongs to the thioredoxin family. Plant H-type subfamily. As to quaternary structure, interacts with MDH1.

Its subcellular location is the cytoplasm. The protein localises to the mitochondrion. Thiol-disulfide oxidoreductase probably involved in the redox regulation of a number of cytosolic enzymes. Possesses insulin disulfide bonds reducing activity. The chain is Thioredoxin H2 (TRX2) from Arabidopsis thaliana (Mouse-ear cress).